We begin with the raw amino-acid sequence, 108 residues long: UPF0145 protein LJ_1287 (108 aa).

This sequence belongs to the UPF0145 family.

The polypeptide is UPF0145 protein LJ_1287 (Lactobacillus johnsonii (strain CNCM I-12250 / La1 / NCC 533)).